We begin with the raw amino-acid sequence, 373 residues long: PqqA peptide cyclase (373 aa).

The 221-residue stretch at isoleucine 7 to aspartate 227 folds into the Radical SAM core domain. 3 residues coordinate [4Fe-4S] cluster: cysteine 21, cysteine 25, and cysteine 28.

The protein belongs to the radical SAM superfamily. PqqE family. Interacts with PqqD. The interaction is necessary for activity of PqqE. [4Fe-4S] cluster serves as cofactor.

The enzyme catalyses [PQQ precursor protein] + S-adenosyl-L-methionine = E-Y cross-linked-[PQQ precursor protein] + 5'-deoxyadenosine + L-methionine + H(+). The protein operates within cofactor biosynthesis; pyrroloquinoline quinone biosynthesis. In terms of biological role, catalyzes the cross-linking of a glutamate residue and a tyrosine residue in the PqqA protein as part of the biosynthesis of pyrroloquinoline quinone (PQQ). The sequence is that of PqqA peptide cyclase from Methylocella silvestris (strain DSM 15510 / CIP 108128 / LMG 27833 / NCIMB 13906 / BL2).